Reading from the N-terminus, the 319-residue chain is NADH-ubiquinone oxidoreductase chain 1 (319 aa).

The next 8 helical transmembrane spans lie at 5–25 (TINSLMYIIPILIAVAFLTLM), 72–92 (LLISSPILALTTAMLIWTPIP), 102–122 (LGLLSILAISSMAVNSILWAG), 146–166 (VTLGIILLSILILTGGFTMQL), 173–193 (FTWLLTTSWPLAMMWFISTLA), 225–245 (FFLTEYANIIVMNLLTCILFI), 254–274 (ELFLINLITKTMILSLSFLWI), and 295–315 (LPLTMSLCLLHTSLPISTSGI).

Belongs to the complex I subunit 1 family.

Its subcellular location is the mitochondrion inner membrane. It carries out the reaction a ubiquinone + NADH + 5 H(+)(in) = a ubiquinol + NAD(+) + 4 H(+)(out). Core subunit of the mitochondrial membrane respiratory chain NADH dehydrogenase (Complex I) that is believed to belong to the minimal assembly required for catalysis. Complex I functions in the transfer of electrons from NADH to the respiratory chain. The immediate electron acceptor for the enzyme is believed to be ubiquinone. This Varanus flavescens (Yellow monitor) protein is NADH-ubiquinone oxidoreductase chain 1 (MT-ND1).